The sequence spans 196 residues: ATP-dependent Clp protease proteolytic subunit (196 aa).

The Nucleophile role is filled by S98. H123 is an active-site residue.

The protein belongs to the peptidase S14 family. As to quaternary structure, fourteen ClpP subunits assemble into 2 heptameric rings which stack back to back to give a disk-like structure with a central cavity, resembling the structure of eukaryotic proteasomes.

The protein localises to the cytoplasm. It carries out the reaction Hydrolysis of proteins to small peptides in the presence of ATP and magnesium. alpha-casein is the usual test substrate. In the absence of ATP, only oligopeptides shorter than five residues are hydrolyzed (such as succinyl-Leu-Tyr-|-NHMec, and Leu-Tyr-Leu-|-Tyr-Trp, in which cleavage of the -Tyr-|-Leu- and -Tyr-|-Trp bonds also occurs).. Its function is as follows. Cleaves peptides in various proteins in a process that requires ATP hydrolysis. Has a chymotrypsin-like activity. Plays a major role in the degradation of misfolded proteins. ClpXP is involved in the complete degradation of the Site-2 clipped anti-sigma-W factor RsiW. This results in the release of SigW and the transcription activation of the genes under the control of the sigma-W factor. This Geobacillus kaustophilus (strain HTA426) protein is ATP-dependent Clp protease proteolytic subunit.